The following is a 256-amino-acid chain: Thioredoxin-dependent peroxide reductase, mitochondrial (256 aa).

Residues Met1–His61 constitute a mitochondrion transit peptide. Positions Pro63–Tyr221 constitute a Thioredoxin domain. Lys83 is modified (N6-succinyllysine). Lys91 bears the N6-acetyllysine; alternate mark. Lys91 carries the N6-succinyllysine; alternate modification. Cys108 serves as the catalytic Cysteine sulfenic acid (-SOH) intermediate. Thr146 is subject to Phosphothreonine.

The protein belongs to the peroxiredoxin family. AhpC/Prx1 subfamily. Homodimer; disulfide-linked, upon oxidation. 6 homodimers assemble to form a ring-like dodecamer. Interacts with NEK6. Interacts with LRRK2. Interacts with MAP3K13. Interacts with RPS6KC1 (via PX domain). Post-translationally, phosphorylated by LRRK2; phosphorylation reduces perodixase activity. In terms of processing, the enzyme can be inactivated by further oxidation of the cysteine sulfenic acid (C(P)-SOH) to sulphinic acid (C(P)-SO2H) and sulphonic acid (C(P)-SO3H) instead of its condensation to a disulfide bond. S-palmitoylated.

The protein resides in the mitochondrion. The protein localises to the cytoplasm. Its subcellular location is the early endosome. It carries out the reaction a hydroperoxide + [thioredoxin]-dithiol = an alcohol + [thioredoxin]-disulfide + H2O. Thiol-specific peroxidase that catalyzes the reduction of hydrogen peroxide and organic hydroperoxides to water and alcohols, respectively. Plays a role in cell protection against oxidative stress by detoxifying peroxides. Acts synergistically with MAP3K13 to regulate the activation of NF-kappa-B in the cytosol. Required for the maintenance of physical strength. The chain is Thioredoxin-dependent peroxide reductase, mitochondrial (PRDX3) from Homo sapiens (Human).